A 194-amino-acid polypeptide reads, in one-letter code: 22 kDa relaxation protein (194 aa).

Its function is as follows. This protein is probably required for relaxation complex formation. This Salmonella typhimurium protein is 22 kDa relaxation protein.